An 865-amino-acid polypeptide reads, in one-letter code: Anaphase-promoting complex subunit 6 (865 aa).

TPR repeat units follow at residues 11 to 42, 46 to 75, and 88 to 149; these read IEKQ…LNLV, SKEY…LIQK, and EDYQ…LQIL. A disordered region spans residues 153–293; it reads NDSSENMDDE…NNNNNNNNNF (141 aa). Residues 183–202 are compositionally biased toward acidic residues; sequence NCDDDDDDDDDDDDDDDDEK. The span at 249-292 shows a compositional bias: low complexity; the sequence is NKNNNKNNNNNNNNNNNNNNNNNNNNNNNNNNNNNNNNNNNNNN. 9 TPR repeats span residues 300-331, 336-359, 366-438, 478-506, 515-542, 573-602, 607-635, 642-670, and 675-709; these read IRSS…ALLT, FEAF…LLEK, DSWI…DIST, DIQT…ILKQ, CLMV…LVDS, AISW…STTL, GASW…TSSR, LPLL…AKDI, and PMIF…KIKS. Residues 403 to 434 are compositionally biased toward low complexity; the sequence is SNNNTFGANNNNNNNNNNNNNNNNNNNNNSNN. The tract at residues 403 to 436 is disordered; the sequence is SNNNTFGANNNNNNNNNNNNNNNNNNNNNSNNDI. Residues 738 to 767 form a disordered region; that stretch reads GIGNNNNNNNNRRTTTTTTTTSNNQKKNSS. TPR repeat units follow at residues 777–809 and 814–843; these read ESWE…SLSL and PSTY…SLSI.

This sequence belongs to the APC6/CDC16 family. As to quaternary structure, the APC/C is composed of at least 13 subunits that stay tightly associated throughout the cell cycle: anapc1, anapc2, anapc3, anapc4, anapc5, anapc6, anapc7, anapc8, anapc10, anapc11, cdc20, cdc26 and cdh1.

Its subcellular location is the nucleus. The protein operates within protein modification; protein ubiquitination. Its function is as follows. Component of the anaphase promoting complex/cyclosome (APC/C), a cell cycle-regulated E3 ubiquitin-protein ligase complex that controls progression through mitosis and the G1 phase of the cell cycle. In Dictyostelium discoideum (Social amoeba), this protein is Anaphase-promoting complex subunit 6 (anapc6).